The sequence spans 364 residues: Dermonecrotic toxin SPH (364 aa).

The signal sequence occupies residues 1-17 (MIRIFALITALAITVKC). His29 functions as the Nucleophile in the catalytic mechanism. Residues Glu49 and Asp51 each coordinate Mg(2+). His65 is a catalytic residue. Intrachain disulfides connect Cys69–Cys75 and Cys71–Cys215. Asp109 provides a ligand contact to Mg(2+).

Belongs to the arthropod phospholipase D family. Mg(2+) is required as a cofactor. Expressed in salivary glands.

It is found in the secreted. It carries out the reaction an N-(acyl)-sphingosylphosphocholine = an N-(acyl)-sphingosyl-1,3-cyclic phosphate + choline. The enzyme catalyses an N-(acyl)-sphingosylphosphoethanolamine = an N-(acyl)-sphingosyl-1,3-cyclic phosphate + ethanolamine. The catalysed reaction is a 1-acyl-sn-glycero-3-phosphocholine = a 1-acyl-sn-glycero-2,3-cyclic phosphate + choline. It catalyses the reaction a 1-acyl-sn-glycero-3-phosphoethanolamine = a 1-acyl-sn-glycero-2,3-cyclic phosphate + ethanolamine. Dermonecrotic toxins cleave the phosphodiester linkage between the phosphate and headgroup of certain phospholipids (sphingolipid and lysolipid substrates), forming an alcohol (often choline) and a cyclic phosphate. Acts on sphingomyelin (SM). It may also act on ceramide phosphoethanolamine (CPE), lysophosphatidylcholine (LPC) and lysophosphatidylethanolamine (LPE), but not on lysophosphatidylserine (LPS), and lysophosphatidylglycerol (LPG). It acts by transphosphatidylation, releasing exclusively cyclic phosphate products as second products. Induces dermonecrosis, hemolysis, increased vascular permeability, edema, inflammatory response, and platelet aggregation. In Ixodes scapularis (Black-legged tick), this protein is Dermonecrotic toxin SPH (SPH).